A 606-amino-acid chain; its full sequence is Sulfite reductase [NADPH] flavoprotein alpha-component (606 aa).

The Flavodoxin-like domain maps to 68-206 (ITILSASQTG…AAEAWRKEVT (139 aa)). FMN is bound by residues 74–79 (SQTGNA), 121–124 (STQG), and 157–166 (LGDITYEHFA). The 215-residue stretch at 240 to 454 (ESPLTATLSV…VEHNDNFRLP (215 aa)) folds into the FAD-binding FR-type domain. FAD-binding positions include Thr-328, Gln-362, 392-395 (RLYS), 410-412 (TVG), Tyr-416, and 425-428 (GGAS). Residues 525 to 526 (SR), 531 to 535 (KVYVQ), and Asp-568 each bind NADP(+). Tyr-606 contacts FAD.

The protein belongs to the NADPH-dependent sulphite reductase flavoprotein subunit CysJ family. It in the N-terminal section; belongs to the flavodoxin family. This sequence in the C-terminal section; belongs to the flavoprotein pyridine nucleotide cytochrome reductase family. Alpha(8)-beta(8). The alpha component is a flavoprotein, the beta component is a hemoprotein. The cofactor is FAD. FMN is required as a cofactor.

The catalysed reaction is hydrogen sulfide + 3 NADP(+) + 3 H2O = sulfite + 3 NADPH + 4 H(+). The protein operates within sulfur metabolism; hydrogen sulfide biosynthesis; hydrogen sulfide from sulfite (NADPH route): step 1/1. Its function is as follows. Component of the sulfite reductase complex that catalyzes the 6-electron reduction of sulfite to sulfide. This is one of several activities required for the biosynthesis of L-cysteine from sulfate. The flavoprotein component catalyzes the electron flow from NADPH -&gt; FAD -&gt; FMN to the hemoprotein component. This is Sulfite reductase [NADPH] flavoprotein alpha-component from Zymomonas mobilis subsp. mobilis (strain ATCC 31821 / ZM4 / CP4).